The primary structure comprises 354 residues: MTRPELRDDVRIVDTTLRDGSHAQSHQFTESQVRDTVRALDGAGVEVIEVTHGDGLGGSTFNYGFSRISDLELVQVAADTAEQAKIAVLLVPGIGTADDLRKAADRGAEVVRIATHCTEADVSLQHFEIARDLGMQTCGFLMMAHRTTPEELARQARLMVDAGCQVPYVTDSAGALLMHEAKDRFDALITEVGDDAWVGYHGHQNMSLGVANSVIAYEAGVRYIDGSLCALGAGAGNSPTELLAAIFDRMNIATGLDVMATLDAAETVVRPYLNRWPKIDRNAIVQGWVGVYSSFLLHAETAGARYGVPVHEILRRCGELGYVGGQEDMIIDVAIQLAKVSGTVSEPSASLVAG.

Positions 10–262 constitute a Pyruvate carboxyltransferase domain; it reads VRIVDTTLRD…ATGLDVMATL (253 aa). Substrate is bound at residue 18–19; it reads RD. D19 provides a ligand contact to Mn(2+). H22 functions as the Proton acceptor in the catalytic mechanism. The substrate site is built by S172 and H201. Mn(2+)-binding residues include H201 and H203. Y292 provides a ligand contact to substrate.

Belongs to the 4-hydroxy-2-oxovalerate aldolase family.

It carries out the reaction (S)-4-hydroxy-2-oxopentanoate = acetaldehyde + pyruvate. In Rhodococcus jostii (strain RHA1), this protein is 4-hydroxy-2-oxovalerate aldolase 6.